We begin with the raw amino-acid sequence, 432 residues long: Glutamate-1-semialdehyde 2,1-aminomutase (432 aa).

Position 269 is an N6-(pyridoxal phosphate)lysine (Lys-269).

The protein belongs to the class-III pyridoxal-phosphate-dependent aminotransferase family. HemL subfamily. As to quaternary structure, homodimer. Pyridoxal 5'-phosphate is required as a cofactor.

Its subcellular location is the cytoplasm. The enzyme catalyses (S)-4-amino-5-oxopentanoate = 5-aminolevulinate. It participates in porphyrin-containing compound metabolism; protoporphyrin-IX biosynthesis; 5-aminolevulinate from L-glutamyl-tRNA(Glu): step 2/2. This is Glutamate-1-semialdehyde 2,1-aminomutase from Desulforudis audaxviator (strain MP104C).